The primary structure comprises 410 residues: Platelet-activating factor acetylhydrolase IB subunit alpha (410 aa).

Positions 1–38 (MVLSQRQRDELNRAIADYLRSNGYEEAYSVFKKEAELD) are required for self-association and interaction with PAFAH1B2 and PAFAH1B3. The tract at residues 1-66 (MVLSQRQRDE…SVIRLQKKVM (66 aa)) is interaction with NDE1. The interaction with NDEL1 stretch occupies residues 1 to 102 (MVLSQRQRDE…EWIPRPPEKY (102 aa)). The 33-residue stretch at 7–39 (QRDELNRAIADYLRSNGYEEAYSVFKKEAELDM) folds into the LisH domain. Position 53 is an N6-acetyllysine (Lys53). Residues 56–82 (TSVIRLQKKVMELESKLNEAKEEFTSG) are a coiled coil. The interval 83 to 410 (GPLGQKRDPK…DQTVKVWECR (328 aa)) is interaction with dynein and dynactin. 7 WD repeats span residues 106–147 (GHRS…RTLK), 148–187 (GHTDSVQDISFDHSGKLLTSCSADMTIKLWDFQGFECIRT), 190–229 (GHDHNVSSVAIMPNGDHLVSASRDKTIKMWEVQTGYCVKT), 232–271 (GHREWVRMVRPNQDGTLIASCSNDQTVRVWVVATKECKAE), 274–333 (EHEH…CLMT), 336–377 (GHDN…KTLN), and 378–410 (AHEHFVTSLDFHKTAPYVVTGSVDQTVKVWECR). Ser109 carries the phosphoserine modification. The tract at residues 367–409 (YKNKRCMKTLNAHEHFVTSLDFHKTAPYVVTGSVDQTVKVWEC) is interaction with DCX. The segment at 388–410 (FHKTAPYVVTGSVDQTVKVWECR) is interaction with NDEL1.

This sequence belongs to the WD repeat LIS1/nudF family. Can self-associate. Component of the cytosolic PAF-AH (I) heterotetrameric enzyme, which is composed of PAFAH1B1 (beta), PAFAH1B2 (alpha2) and PAFAH1B3 (alpha1) subunits. The catalytic activity of the enzyme resides in the alpha1 (PAFAH1B3) and alpha2 (PAFAH1B2) subunits, whereas the beta subunit (PAFAH1B1) has regulatory activity. Trimer formation is not essential for the catalytic activity. Interacts with the catalytic dimer of PAF-AH (I) heterotetrameric enzyme: interacts with PAFAH1B2 homodimer (alpha2/alpha2 homodimer), PAFAH1B3 homodimer (alpha1/alpha1 homodimer) and PAFAH1B2-PAFAH1B3 heterodimer (alpha2/alpha1 heterodimer). Interacts with DCX, dynein, dynactin, IQGAP1, KATNB1, NDE1, NDEL1, NUDC and RSN. Interacts with DISC1, and this interaction is enhanced by NDEL1. Interacts with DAB1 when DAB1 is phosphorylated in response to RELN/reelin signaling. Interacts with INTS13. Interacts with DCDC1.

Its subcellular location is the cytoplasm. It is found in the cytoskeleton. The protein resides in the microtubule organizing center. It localises to the centrosome. The protein localises to the spindle. Its subcellular location is the nucleus membrane. Its function is as follows. Regulatory subunit (beta subunit) of the cytosolic type I platelet-activating factor (PAF) acetylhydrolase (PAF-AH (I)), an enzyme that catalyzes the hydrolyze of the acetyl group at the sn-2 position of PAF and its analogs and participates in PAF inactivation. Regulates the PAF-AH (I) activity in a catalytic dimer composition-dependent manner. Positively regulates the activity of the minus-end directed microtubule motor protein dynein. May enhance dynein-mediated microtubule sliding by targeting dynein to the microtubule plus end. Required for several dynein- and microtubule-dependent processes such as the maintenance of Golgi integrity, the peripheral transport of microtubule fragments and the coupling of the nucleus and centrosome. Required during brain development for the proliferation of neuronal precursors and the migration of newly formed neurons from the ventricular/subventricular zone toward the cortical plate. Neuronal migration involves a process called nucleokinesis, whereby migrating cells extend an anterior process into which the nucleus subsequently translocates. During nucleokinesis dynein at the nuclear surface may translocate the nucleus towards the centrosome by exerting force on centrosomal microtubules. Also required for proper activation of Rho GTPases and actin polymerization at the leading edge of locomoting cerebellar neurons and postmigratory hippocampal neurons in response to calcium influx triggered via NMDA receptors. May also play a role in other forms of cell locomotion including the migration of fibroblasts during wound healing. Required for dynein recruitment to microtubule plus ends and BICD2-bound cargos. May modulate the Reelin pathway through interaction of the PAF-AH (I) catalytic dimer with VLDLR. In Macaca fascicularis (Crab-eating macaque), this protein is Platelet-activating factor acetylhydrolase IB subunit alpha.